The chain runs to 249 residues: MNTRFLLLLCCLSFTTFSQPFDAIKQPNRSEEEVTQLAEDFKDWSKASNGWRYSFITANEKEAVEDFSISGYQTANDYLRATDTSTWGVAGADARQYIRTVKSALNKLPKYKGTAYRGTWVKLSLLNKLEEGDVLVEPAFTSTSTLPEVAKRFSVVHPNSPQRLKRVLFEVKINQGGHTIAGLSEYSKEAEVLFAPNAHFRITQIERTSNHTYIGVETVKASAVKNTQKYNLYSGEEVEASFWHSLVCT.

The signal sequence occupies residues 1-18 (MNTRFLLLLCCLSFTTFS). The TR mART core domain maps to 31–223 (EEEVTQLAED…IGVETVKASA (193 aa)). NAD(+)-binding positions include 68-80 (SISGYQTANDYLR), 117-120 (RGTW), and Glu-137. Residue Arg-117 is part of the active site. Active-site residues include Ser-142 and Glu-191. Glu-191 serves as a coordination point for NAD(+).

The protein belongs to the Arg-specific ADP-ribosyltransferase family.

The protein resides in the secreted. The catalysed reaction is L-arginyl-[protein] + NAD(+) = N(omega)-(ADP-D-ribosyl)-L-arginyl-[protein] + nicotinamide + H(+). A probable mono(ADP-ribosyl)transferase, it may ADP-ribosylate Arg in target protein(s). Upon expression in yeast cells causes cell death. This Vibrio splendidus (strain 12B01) protein is Putative NAD(+)--arginine ADP-ribosyltransferase Vis.